A 552-amino-acid polypeptide reads, in one-letter code: uncharacterized protein (552 aa).

This is an uncharacterized protein from Bacillus subtilis (strain 168).